The sequence spans 85 residues: UPF0386 protein Plav_1374 (85 aa).

This sequence belongs to the UPF0386 family.

This is UPF0386 protein Plav_1374 from Parvibaculum lavamentivorans (strain DS-1 / DSM 13023 / NCIMB 13966).